Consider the following 201-residue polypeptide: UPF0098 protein MT1961 (201 aa).

The interval 125-146 (TADGETPGGGISLPNSSGQPAY) is disordered.

This sequence belongs to the UPF0098 family.

In Mycobacterium tuberculosis (strain CDC 1551 / Oshkosh), this protein is UPF0098 protein MT1961.